A 180-amino-acid polypeptide reads, in one-letter code: MDLPDVAAVQHESRQLDLASSAAELHGGLCGWLSGGGADSADWLARILADTAQVAPAQGGALDQMRQATVAQLEDRDFAFELLLTEDGAPLPARTDALFDWCRAFLGGFGLAAQQRPALSEEGEEALQDLARLAQASSDDFDTAEEDDTALAEIEEFVRVAVLLLHGDCVMGPRFRQRLN.

It belongs to the UPF0149 family.

This chain is UPF0149 protein XC_0904, found in Xanthomonas campestris pv. campestris (strain 8004).